The primary structure comprises 233 residues: Pyridoxal phosphate homeostasis protein (233 aa).

An N6-(pyridoxal phosphate)lysine modification is found at lysine 36.

Belongs to the pyridoxal phosphate-binding protein YggS/PROSC family.

Pyridoxal 5'-phosphate (PLP)-binding protein, which is involved in PLP homeostasis. The chain is Pyridoxal phosphate homeostasis protein from Vibrio alginolyticus.